We begin with the raw amino-acid sequence, 595 residues long: Elongation factor 4 (595 aa).

Residues 2–184 (ETIRNFSIIA…TITHNIPYPK (183 aa)) enclose the tr-type G domain. GTP is bound by residues 14–19 (DHGKST) and 131–134 (NKID).

The protein belongs to the TRAFAC class translation factor GTPase superfamily. Classic translation factor GTPase family. LepA subfamily.

Its subcellular location is the cell membrane. The catalysed reaction is GTP + H2O = GDP + phosphate + H(+). Required for accurate and efficient protein synthesis under certain stress conditions. May act as a fidelity factor of the translation reaction, by catalyzing a one-codon backward translocation of tRNAs on improperly translocated ribosomes. Back-translocation proceeds from a post-translocation (POST) complex to a pre-translocation (PRE) complex, thus giving elongation factor G a second chance to translocate the tRNAs correctly. Binds to ribosomes in a GTP-dependent manner. The sequence is that of Elongation factor 4 from Buchnera aphidicola subsp. Baizongia pistaciae (strain Bp).